The primary structure comprises 77 residues: MKLIIFTGLILFAIVSLIEAQANNEKACLPQYQVCTDAPGNCCSNLVCDCYGRYKSGARIGRNCFCLLKGVIYKREN.

The signal sequence occupies residues 1-20 (MKLIIFTGLILFAIVSLIEA). Positions 21–26 (QANNEK) are excised as a propeptide.

Belongs to the neurotoxin 19 (CSTX) family. 08 (U8-Lctx) subfamily. In terms of processing, contains 4 disulfide bonds. As to expression, expressed by the venom gland.

It localises to the secreted. The chain is U8-lycotoxin-Ls1j from Lycosa singoriensis (Wolf spider).